Consider the following 349-residue polypeptide: Nicotinate-nucleotide--dimethylbenzimidazole phosphoribosyltransferase (349 aa).

E316 acts as the Proton acceptor in catalysis.

The protein belongs to the CobT family.

It catalyses the reaction 5,6-dimethylbenzimidazole + nicotinate beta-D-ribonucleotide = alpha-ribazole 5'-phosphate + nicotinate + H(+). The protein operates within nucleoside biosynthesis; alpha-ribazole biosynthesis; alpha-ribazole from 5,6-dimethylbenzimidazole: step 1/2. Catalyzes the synthesis of alpha-ribazole-5'-phosphate from nicotinate mononucleotide (NAMN) and 5,6-dimethylbenzimidazole (DMB). The sequence is that of Nicotinate-nucleotide--dimethylbenzimidazole phosphoribosyltransferase from Photorhabdus laumondii subsp. laumondii (strain DSM 15139 / CIP 105565 / TT01) (Photorhabdus luminescens subsp. laumondii).